The chain runs to 89 residues: Putative membrane protein insertion efficiency factor (89 aa).

The interval 68-89 is disordered; the sequence is VPPPNSDARNAPHEAEASSHRL. The span at 77-89 shows a compositional bias: basic and acidic residues; the sequence is NAPHEAEASSHRL.

Belongs to the UPF0161 family.

It is found in the cell inner membrane. In terms of biological role, could be involved in insertion of integral membrane proteins into the membrane. The protein is Putative membrane protein insertion efficiency factor of Burkholderia thailandensis (strain ATCC 700388 / DSM 13276 / CCUG 48851 / CIP 106301 / E264).